A 284-amino-acid chain; its full sequence is Tropomyosin (284 aa).

Positions 1–284 (MDAIKKKMVA…DATFAELAGY (284 aa)) form a coiled coil. The segment covering 32–41 (TEEAKAKIED) has biased composition (basic and acidic residues). Residues 32-60 (TEEAKAKIEDDYNSLQKKSIQTENDLDNT) form a disordered region. The segment covering 44–60 (NSLQKKSIQTENDLDNT) has biased composition (polar residues).

Belongs to the tropomyosin family. Homodimer.

Its function is as follows. Tropomyosin, in association with the troponin complex, plays a central role in the calcium dependent regulation of muscle contraction. This Mytilus edulis (Blue mussel) protein is Tropomyosin.